Here is a 434-residue protein sequence, read N- to C-terminus: Serine hydroxymethyltransferase (434 aa).

Residues L124 and 128-130 contribute to the (6S)-5,6,7,8-tetrahydrofolate site; that span reads GHL. K233 carries the post-translational modification N6-(pyridoxal phosphate)lysine. E249 lines the (6S)-5,6,7,8-tetrahydrofolate pocket.

It belongs to the SHMT family. Homodimer. Pyridoxal 5'-phosphate is required as a cofactor.

Its subcellular location is the cytoplasm. It catalyses the reaction (6R)-5,10-methylene-5,6,7,8-tetrahydrofolate + glycine + H2O = (6S)-5,6,7,8-tetrahydrofolate + L-serine. It participates in one-carbon metabolism; tetrahydrofolate interconversion. The protein operates within amino-acid biosynthesis; glycine biosynthesis; glycine from L-serine: step 1/1. Catalyzes the reversible interconversion of serine and glycine with tetrahydrofolate (THF) serving as the one-carbon carrier. This reaction serves as the major source of one-carbon groups required for the biosynthesis of purines, thymidylate, methionine, and other important biomolecules. Also exhibits THF-independent aldolase activity toward beta-hydroxyamino acids, producing glycine and aldehydes, via a retro-aldol mechanism. The polypeptide is Serine hydroxymethyltransferase (Synechococcus sp. (strain JA-3-3Ab) (Cyanobacteria bacterium Yellowstone A-Prime)).